The sequence spans 82 residues: Sec-independent protein translocase protein TatA (82 aa).

Residues 1–21 form a helical membrane-spanning segment; it reads MGGISIWQLLIIAVIIVLLFG. Residues 46-82 are disordered; sequence DEPAKDAKKDADFVPQNLEKKEAETVEKQKQNDKEQA.

It belongs to the TatA/E family. In terms of assembly, the Tat system comprises two distinct complexes: a TatABC complex, containing multiple copies of TatA, TatB and TatC subunits, and a separate TatA complex, containing only TatA subunits. Substrates initially bind to the TatABC complex, which probably triggers association of the separate TatA complex to form the active translocon.

It localises to the cell inner membrane. Functionally, part of the twin-arginine translocation (Tat) system that transports large folded proteins containing a characteristic twin-arginine motif in their signal peptide across membranes. TatA could form the protein-conducting channel of the Tat system. The sequence is that of Sec-independent protein translocase protein TatA from Aliivibrio fischeri (strain MJ11) (Vibrio fischeri).